The sequence spans 92 residues: Small ribosomal subunit protein uS19c (92 aa).

Belongs to the universal ribosomal protein uS19 family.

Its subcellular location is the plastid. It localises to the chloroplast. Protein S19 forms a complex with S13 that binds strongly to the 16S ribosomal RNA. This chain is Small ribosomal subunit protein uS19c, found in Draba nemorosa (Woodland whitlowgrass).